The sequence spans 376 residues: Lactosylceramide 1,3-N-acetyl-beta-D-glucosaminyltransferase (376 aa).

At 1-13 (MRLFVSRRVKRWK) the chain is on the cytoplasmic side. The helical; Signal-anchor for type II membrane protein transmembrane segment at 14 to 34 (IFHFFVTCFILSFMVFWSPIN) threads the bilayer. The Lumenal segment spans residues 35–376 (NYIMSHMKSY…NSYPCWAAFA (342 aa)). The N-linked (GlcNAc...) asparagine glycan is linked to asparagine 57.

The protein belongs to the glycosyltransferase 31 family. As to expression, highly expressed in adult spleen, placenta and cerebellar Purkinje cells where it colocalizes with HNK-1. Expressed at lower level in brain, lung, thymus and muscle.

The protein resides in the golgi apparatus membrane. It carries out the reaction a beta-D-Gal-(1-&gt;4)-beta-D-Glc-(1&lt;-&gt;1)-Cer(d18:1(4E)) + UDP-N-acetyl-alpha-D-glucosamine = a beta-D-GlcNAc-(1-&gt;3)-beta-D-Gal-(1-&gt;4)-beta-D-Glc-(1&lt;-&gt;1)-Cer(d18:1(4E)) + UDP + H(+). The enzyme catalyses a neolactoside nLc4Cer(d18:1(4E)) + UDP-N-acetyl-alpha-D-glucosamine = a neolactoside IV(3)-beta-GlcNAc-nLc4Cer(d18:1(4E)) + UDP + H(+). The protein operates within protein modification; protein glycosylation. Beta-1,3-N-acetylglucosaminyltransferase that plays a key role in the synthesis of lacto- or neolacto-series carbohydrate chains on glycolipids, notably by participating in biosynthesis of HNK-1 and Lewis X carbohydrate structures. Has strong activity toward lactosylceramide (LacCer) and neolactotetraosylceramide (nLc(4)Cer; paragloboside), resulting in the synthesis of Lc(3)Cer and neolactopentaosylceramide (nLc(5)Cer), respectively. Plays a central role in regulating neolacto-series glycolipid synthesis during embryonic development. The polypeptide is Lactosylceramide 1,3-N-acetyl-beta-D-glucosaminyltransferase (Mus musculus (Mouse)).